Here is a 356-residue protein sequence, read N- to C-terminus: MIYSDFISPQTQFYQLTVPFQLESGKVLIGVQVAYRSWGELNAQGDNGVLICHALTGSADADDWWEPLFGSGKAFNPDRDFIVCSNILGSCYGTTGPTTINPTTRKPYGVSFPKITIRDMVRLQAVLLEYLGVQSLRFVIGGSLGGMQSLEWALLYPDKVKSIAPIAVSGRHSAWCIGLSEAQRQAIYADPNWQGGNYTLDAPPNQGLAVARMMAMSTYRSWDSFTTRFGRQYDPSEKFAIASYLQHQGQKLTERFDANTYIILTHAMDGHDIARDRTAPNLSDYESVLGSIQQPTLVVAIDSDILYPPVEQQELANLIPNAQLSWLKSTHGHDAFLIDMAALNEIIQQNHEFVLF.

Residues 49-337 (VLICHALTGS…KSTHGHDAFL (289 aa)) form the AB hydrolase-1 domain. S143 acts as the Nucleophile in catalysis. R212 contributes to the substrate binding site. Residues D304 and H333 contribute to the active site. Substrate is bound at residue D334.

The protein belongs to the AB hydrolase superfamily. MetX family. Homodimer.

Its subcellular location is the cytoplasm. The enzyme catalyses L-homoserine + acetyl-CoA = O-acetyl-L-homoserine + CoA. Its pathway is amino-acid biosynthesis; L-methionine biosynthesis via de novo pathway; O-acetyl-L-homoserine from L-homoserine: step 1/1. Transfers an acetyl group from acetyl-CoA to L-homoserine, forming acetyl-L-homoserine. The polypeptide is Homoserine O-acetyltransferase (Nostoc punctiforme (strain ATCC 29133 / PCC 73102)).